Reading from the N-terminus, the 298-residue chain is Elongation factor Ts (298 aa).

The tract at residues 78-81 (TDFV) is involved in Mg(2+) ion dislocation from EF-Tu.

Belongs to the EF-Ts family.

The protein localises to the cytoplasm. Functionally, associates with the EF-Tu.GDP complex and induces the exchange of GDP to GTP. It remains bound to the aminoacyl-tRNA.EF-Tu.GTP complex up to the GTP hydrolysis stage on the ribosome. The protein is Elongation factor Ts of Mycoplasmopsis agalactiae (strain NCTC 10123 / CIP 59.7 / PG2) (Mycoplasma agalactiae).